We begin with the raw amino-acid sequence, 377 residues long: Homoserine O-succinyltransferase (377 aa).

One can recognise an AB hydrolase-1 domain in the interval 50–359 (NAVLVCHALS…SSHGHDSFLM (310 aa)). Ser156 (nucleophile) is an active-site residue. Arg226 contacts substrate. Residues Asp321 and His354 contribute to the active site. Asp355 is a substrate binding site.

The protein belongs to the AB hydrolase superfamily. MetX family. In terms of assembly, homodimer.

It is found in the cytoplasm. The enzyme catalyses L-homoserine + succinyl-CoA = O-succinyl-L-homoserine + CoA. The protein operates within amino-acid biosynthesis; L-methionine biosynthesis via de novo pathway; O-succinyl-L-homoserine from L-homoserine: step 1/1. Transfers a succinyl group from succinyl-CoA to L-homoserine, forming succinyl-L-homoserine. In Nitrosospira multiformis (strain ATCC 25196 / NCIMB 11849 / C 71), this protein is Homoserine O-succinyltransferase.